The chain runs to 319 residues: Annexin A4 (319 aa).

The residue at position 2 (Ala-2) is an N-acetylalanine. Thr-7 is subject to Phosphothreonine. At Ser-12 the chain carries Phosphoserine. Annexin repeat units follow at residues 14 to 85 (FSAT…GMIT), 86 to 157 (PTVL…SLSA), 169 to 241 (ALMR…AIVK), and 245 to 316 (NKSA…ILCG). An N6-acetyllysine mark is found at Lys-213, Lys-293, and Lys-300.

This sequence belongs to the annexin family. Expressed in pancreas (at protein level). Also detected in liver, spleen, intestine, stomach, kidney, and adrenal glands.

The protein resides in the zymogen granule membrane. Calcium/phospholipid-binding protein which promotes membrane fusion and is involved in exocytosis. The chain is Annexin A4 (ANXA4) from Canis lupus familiaris (Dog).